Reading from the N-terminus, the 139-residue chain is Small integral membrane protein 34 (139 aa).

The helical transmembrane segment at 46-66 threads the bilayer; the sequence is GTSAAWYILTIIGIYAVIFVF.

The protein localises to the membrane. The polypeptide is Small integral membrane protein 34 (Homo sapiens (Human)).